Consider the following 188-residue polypeptide: Peptide deformylase (188 aa).

Positions 94 and 136 each coordinate Fe cation. Glutamate 137 is a catalytic residue. Histidine 140 is a binding site for Fe cation.

It belongs to the polypeptide deformylase family. Fe(2+) is required as a cofactor.

It carries out the reaction N-terminal N-formyl-L-methionyl-[peptide] + H2O = N-terminal L-methionyl-[peptide] + formate. Functionally, removes the formyl group from the N-terminal Met of newly synthesized proteins. Requires at least a dipeptide for an efficient rate of reaction. N-terminal L-methionine is a prerequisite for activity but the enzyme has broad specificity at other positions. The chain is Peptide deformylase from Chlorobium phaeobacteroides (strain DSM 266 / SMG 266 / 2430).